The primary structure comprises 327 residues: GTPase Obg (327 aa).

In terms of domain architecture, Obg spans 1 to 159; that stretch reads MKFVDSARIV…LKVDLELKLM (159 aa). The segment at 120 to 145 is disordered; the sequence is GGDGGRGNPHFTTSTRQAPRYAEPGG. Residues 160–323 form the OBG-type G domain; the sequence is ADVGLVGFPN…LRNALWNTIN (164 aa). GTP-binding positions include 166–173, 191–195, 213–216, 280–283, and 304–306; these read GFPNAGKS, FTTLV, DIPG, TKMD, and SSI. Ser-173 and Thr-193 together coordinate Mg(2+).

This sequence belongs to the TRAFAC class OBG-HflX-like GTPase superfamily. OBG GTPase family. In terms of assembly, monomer. It depends on Mg(2+) as a cofactor.

The protein localises to the cytoplasm. An essential GTPase which binds GTP, GDP and possibly (p)ppGpp with moderate affinity, with high nucleotide exchange rates and a fairly low GTP hydrolysis rate. Plays a role in control of the cell cycle, stress response, ribosome biogenesis and in those bacteria that undergo differentiation, in morphogenesis control. The polypeptide is GTPase Obg (Prosthecochloris aestuarii (strain DSM 271 / SK 413)).